The chain runs to 689 residues: Glycine--tRNA ligase beta subunit (689 aa).

The protein belongs to the class-II aminoacyl-tRNA synthetase family. As to quaternary structure, tetramer of two alpha and two beta subunits.

Its subcellular location is the cytoplasm. It carries out the reaction tRNA(Gly) + glycine + ATP = glycyl-tRNA(Gly) + AMP + diphosphate. In Salmonella paratyphi C (strain RKS4594), this protein is Glycine--tRNA ligase beta subunit.